The sequence spans 187 residues: Elongation factor P (187 aa).

The protein belongs to the elongation factor P family.

The protein localises to the cytoplasm. The protein operates within protein biosynthesis; polypeptide chain elongation. In terms of biological role, involved in peptide bond synthesis. Stimulates efficient translation and peptide-bond synthesis on native or reconstituted 70S ribosomes in vitro. Probably functions indirectly by altering the affinity of the ribosome for aminoacyl-tRNA, thus increasing their reactivity as acceptors for peptidyl transferase. The sequence is that of Elongation factor P from Mycolicibacterium vanbaalenii (strain DSM 7251 / JCM 13017 / BCRC 16820 / KCTC 9966 / NRRL B-24157 / PYR-1) (Mycobacterium vanbaalenii).